The following is a 303-amino-acid chain: 2-dehydropantoate 2-reductase (303 aa).

NADP(+) is bound by residues 7-12 (GCGALG), asparagine 98, and alanine 122. Asparagine 98 contacts substrate. The active-site Proton donor is the lysine 176. Substrate is bound by residues asparagine 180, asparagine 184, asparagine 194, and serine 244. Glutamate 256 serves as a coordination point for NADP(+).

This sequence belongs to the ketopantoate reductase family. Monomer.

It is found in the cytoplasm. It catalyses the reaction (R)-pantoate + NADP(+) = 2-dehydropantoate + NADPH + H(+). The protein operates within cofactor biosynthesis; (R)-pantothenate biosynthesis; (R)-pantoate from 3-methyl-2-oxobutanoate: step 2/2. Its function is as follows. Catalyzes the NADPH-dependent reduction of ketopantoate into pantoic acid. This Shigella flexneri protein is 2-dehydropantoate 2-reductase (panE).